Consider the following 185-residue polypeptide: Prenylated Rab acceptor protein 1 (185 aa).

Residues 1 to 78 lie on the Cytoplasmic side of the membrane; sequence MAAQKDQQKD…RNVEYYQSNY (78 aa). The interval 30 to 54 is required for interaction with prenylated RAB3A and VAMP2; the sequence is AGREWLERRRATIRPWGTFVDQQRF. 2 helical membrane-spanning segments follow: residues 79 to 94 and 95 to 112; these read VFVF…VTSP and MLLV…ILYL. Residues 113-131 are Cytoplasmic-facing; that stretch reads RTLQSKLVLFGREVSPAHQ. Transmembrane regions (helical) follow at residues 132–148 and 149–165; these read YALA…LAGA and GSAV…LIGS. The tract at residues 165-185 is required for interaction with GDI1; it reads SHAAFHQMEPADGEELQMEPV. The Cytoplasmic portion of the chain corresponds to 166-185; that stretch reads HAAFHQMEPADGEELQMEPV. Positions 175-185 are required for interaction with prenylated RAB3A and VAMP2; that stretch reads ADGEELQMEPV. The homodimerization stretch occupies residues 175 to 185; the sequence is ADGEELQMEPV.

This sequence belongs to the PRA1 family. Homodimer. Interacts with VAMP2 (synaptobrevin-2), GDI1, NRDG1 and PCLO. Interacts with prenylated Rab proteins (including RAB5 and RAB6), and with the members of the Ras superfamily HRAS, RHOA, TC21, and RAP1A.

The protein localises to the cell membrane. Its subcellular location is the cytoplasm. The protein resides in the golgi apparatus. It localises to the cytoplasmic vesicle. It is found in the secretory vesicle. The protein localises to the synaptic vesicle. Its function is as follows. General Rab protein regulator required for vesicle formation from the Golgi complex. May control vesicle docking and fusion by mediating the action of Rab GTPases to the SNARE complexes. In addition it inhibits the removal of Rab GTPases from the membrane by GDI1. This Mus musculus (Mouse) protein is Prenylated Rab acceptor protein 1 (Rabac1).